The sequence spans 585 residues: 1-deoxy-D-xylulose-5-phosphate synthase (585 aa).

Residues histidine 80 and 121–123 (GHS) each bind thiamine diphosphate. Aspartate 152 is a binding site for Mg(2+). Residues 153–154 (GS), asparagine 181, tyrosine 259, and glutamate 334 contribute to the thiamine diphosphate site. Asparagine 181 contacts Mg(2+).

It belongs to the transketolase family. DXPS subfamily. Homodimer. Mg(2+) serves as cofactor. It depends on thiamine diphosphate as a cofactor.

The enzyme catalyses D-glyceraldehyde 3-phosphate + pyruvate + H(+) = 1-deoxy-D-xylulose 5-phosphate + CO2. It functions in the pathway metabolic intermediate biosynthesis; 1-deoxy-D-xylulose 5-phosphate biosynthesis; 1-deoxy-D-xylulose 5-phosphate from D-glyceraldehyde 3-phosphate and pyruvate: step 1/1. Functionally, catalyzes the acyloin condensation reaction between C atoms 2 and 3 of pyruvate and glyceraldehyde 3-phosphate to yield 1-deoxy-D-xylulose-5-phosphate (DXP). The polypeptide is 1-deoxy-D-xylulose-5-phosphate synthase (Buchnera aphidicola subsp. Schizaphis graminum (strain Sg)).